A 233-amino-acid polypeptide reads, in one-letter code: Octanoyltransferase (233 aa).

Residues 36-211 form the BPL/LPL catalytic domain; it reads DTTPDEIWLV…EFTRQLGYPT (176 aa). Substrate is bound by residues 75-82, 142-144, and 155-157; these read RGGQVTYH, SLG, and GLA. Cys-173 acts as the Acyl-thioester intermediate in catalysis.

Belongs to the LipB family.

Its subcellular location is the cytoplasm. The catalysed reaction is octanoyl-[ACP] + L-lysyl-[protein] = N(6)-octanoyl-L-lysyl-[protein] + holo-[ACP] + H(+). Its pathway is protein modification; protein lipoylation via endogenous pathway; protein N(6)-(lipoyl)lysine from octanoyl-[acyl-carrier-protein]: step 1/2. Functionally, catalyzes the transfer of endogenously produced octanoic acid from octanoyl-acyl-carrier-protein onto the lipoyl domains of lipoate-dependent enzymes. Lipoyl-ACP can also act as a substrate although octanoyl-ACP is likely to be the physiological substrate. The protein is Octanoyltransferase of Yersinia pestis bv. Antiqua (strain Antiqua).